The sequence spans 135 residues: UPF0306 protein C8J_1355 (135 aa).

Belongs to the UPF0306 family.

This chain is UPF0306 protein C8J_1355, found in Campylobacter jejuni subsp. jejuni serotype O:6 (strain 81116 / NCTC 11828).